Reading from the N-terminus, the 346-residue chain is Holliday junction branch migration complex subunit RuvB (346 aa).

Positions Met-1–Tyr-182 are large ATPase domain (RuvB-L). Residues Ile-21, Arg-22, Gly-63, Lys-66, Thr-67, Thr-68, Glu-129 to Phe-131, Arg-172, Tyr-182, and Arg-219 contribute to the ATP site. Thr-67 is a Mg(2+) binding site. The tract at residues Pro-183–Glu-253 is small ATPAse domain (RuvB-S). The tract at residues Glu-256–Arg-346 is head domain (RuvB-H). Arg-311 and Arg-316 together coordinate DNA.

Belongs to the RuvB family. Homohexamer. Forms an RuvA(8)-RuvB(12)-Holliday junction (HJ) complex. HJ DNA is sandwiched between 2 RuvA tetramers; dsDNA enters through RuvA and exits via RuvB. An RuvB hexamer assembles on each DNA strand where it exits the tetramer. Each RuvB hexamer is contacted by two RuvA subunits (via domain III) on 2 adjacent RuvB subunits; this complex drives branch migration. In the full resolvosome a probable DNA-RuvA(4)-RuvB(12)-RuvC(2) complex forms which resolves the HJ.

The protein resides in the cytoplasm. It carries out the reaction ATP + H2O = ADP + phosphate + H(+). In terms of biological role, the RuvA-RuvB-RuvC complex processes Holliday junction (HJ) DNA during genetic recombination and DNA repair, while the RuvA-RuvB complex plays an important role in the rescue of blocked DNA replication forks via replication fork reversal (RFR). RuvA specifically binds to HJ cruciform DNA, conferring on it an open structure. The RuvB hexamer acts as an ATP-dependent pump, pulling dsDNA into and through the RuvAB complex. RuvB forms 2 homohexamers on either side of HJ DNA bound by 1 or 2 RuvA tetramers; 4 subunits per hexamer contact DNA at a time. Coordinated motions by a converter formed by DNA-disengaged RuvB subunits stimulates ATP hydrolysis and nucleotide exchange. Immobilization of the converter enables RuvB to convert the ATP-contained energy into a lever motion, pulling 2 nucleotides of DNA out of the RuvA tetramer per ATP hydrolyzed, thus driving DNA branch migration. The RuvB motors rotate together with the DNA substrate, which together with the progressing nucleotide cycle form the mechanistic basis for DNA recombination by continuous HJ branch migration. Branch migration allows RuvC to scan DNA until it finds its consensus sequence, where it cleaves and resolves cruciform DNA. The polypeptide is Holliday junction branch migration complex subunit RuvB (Chlorobium phaeobacteroides (strain DSM 266 / SMG 266 / 2430)).